A 325-amino-acid chain; its full sequence is Glyoxylate/hydroxypyruvate reductase B (325 aa).

Residues Arg237 and Glu266 contribute to the active site. His285 (proton donor) is an active-site residue.

Belongs to the D-isomer specific 2-hydroxyacid dehydrogenase family. GhrB subfamily. In terms of assembly, homodimer.

The protein localises to the cytoplasm. It catalyses the reaction glycolate + NADP(+) = glyoxylate + NADPH + H(+). The catalysed reaction is (R)-glycerate + NAD(+) = 3-hydroxypyruvate + NADH + H(+). The enzyme catalyses (R)-glycerate + NADP(+) = 3-hydroxypyruvate + NADPH + H(+). Catalyzes the NADPH-dependent reduction of glyoxylate and hydroxypyruvate into glycolate and glycerate, respectively. This Serratia proteamaculans (strain 568) protein is Glyoxylate/hydroxypyruvate reductase B.